The sequence spans 459 residues: Cysteine--tRNA ligase (459 aa).

Residue cysteine 28 coordinates Zn(2+). Residues 30-40 (VTVYDLCHFGH) carry the 'HIGH' region motif. The Zn(2+) site is built by cysteine 209, histidine 234, and glutamate 238. Positions 266-270 (KMSKS) match the 'KMSKS' region motif. Lysine 269 is a binding site for ATP.

Belongs to the class-I aminoacyl-tRNA synthetase family. In terms of assembly, monomer. Zn(2+) serves as cofactor.

The protein localises to the cytoplasm. It carries out the reaction tRNA(Cys) + L-cysteine + ATP = L-cysteinyl-tRNA(Cys) + AMP + diphosphate. This chain is Cysteine--tRNA ligase, found in Glaesserella parasuis serovar 5 (strain SH0165) (Haemophilus parasuis).